The chain runs to 235 residues: Pyridoxine 5'-phosphate synthase (235 aa).

Residue asparagine 6 coordinates 3-amino-2-oxopropyl phosphate. 8 to 9 (DH) provides a ligand contact to 1-deoxy-D-xylulose 5-phosphate. Residue arginine 17 participates in 3-amino-2-oxopropyl phosphate binding. The active-site Proton acceptor is the histidine 42. The 1-deoxy-D-xylulose 5-phosphate site is built by arginine 44 and histidine 49. Catalysis depends on glutamate 69, which acts as the Proton acceptor. Residue threonine 99 coordinates 1-deoxy-D-xylulose 5-phosphate. The active-site Proton donor is histidine 189. Residues glycine 190 and 211–212 (GH) contribute to the 3-amino-2-oxopropyl phosphate site.

Belongs to the PNP synthase family. Homooctamer; tetramer of dimers.

It is found in the cytoplasm. It catalyses the reaction 3-amino-2-oxopropyl phosphate + 1-deoxy-D-xylulose 5-phosphate = pyridoxine 5'-phosphate + phosphate + 2 H2O + H(+). It functions in the pathway cofactor biosynthesis; pyridoxine 5'-phosphate biosynthesis; pyridoxine 5'-phosphate from D-erythrose 4-phosphate: step 5/5. Its function is as follows. Catalyzes the complicated ring closure reaction between the two acyclic compounds 1-deoxy-D-xylulose-5-phosphate (DXP) and 3-amino-2-oxopropyl phosphate (1-amino-acetone-3-phosphate or AAP) to form pyridoxine 5'-phosphate (PNP) and inorganic phosphate. The protein is Pyridoxine 5'-phosphate synthase of Chlorobium chlorochromatii (strain CaD3).